We begin with the raw amino-acid sequence, 1170 residues long: Glucose transport transcription regulator RGT1 (1170 aa).

The segment covering 1-22 (MNELNTVSTNSSDSTKNGGTSN) has biased composition (polar residues). The segment at 1 to 46 (MNELNTVSTNSSDSTKNGGTSNSPDDMDSAAAASHAIKKRTKASRA) is disordered. The zn(2)-C6 fungal-type DNA-binding region spans 47 to 76 (CDQCRKKKIKCDYKDEKGVCSNCQRNGDRC). Residues 77-148 (SFDRVPLKRG…VPSTPSRSNS (72 aa)) form a disordered region. A compositionally biased stretch (basic and acidic residues) spans 99–108 (RTNEIQDHNN). Residues 113 to 138 (NTFDNSNNTLNNNTGNSGDNGINSNT) are compositionally biased toward low complexity. The span at 139 to 148 (VPSTPSRSNS) shows a compositional bias: polar residues. Phosphoserine is present on residues Ser202, Ser205, Ser208, and Ser229. Residues 217–234 (PNEQLSYNTVQQSPITNK) show a composition bias toward polar residues. Disordered regions lie at residues 217-254 (PNEQ…SASG), 269-288 (APTD…IPSL), 293-343 (SNSL…PSIS), 384-506 (AQQT…HPMT), 725-757 (DEEA…NSPN), and 946-974 (RPPN…GNLN). Residues 239–250 (SGNANGSVTGSG) show a composition bias toward low complexity. The span at 271 to 280 (TDDHNGEQTR) shows a compositional bias: basic and acidic residues. 2 positions are modified to phosphoserine: Ser283 and Ser284. Composition is skewed to low complexity over residues 293 to 302 (SNSLLLGGQP), 309 to 341 (QQSQ…YNPS), and 385 to 397 (QQTQ…QVPQ). Ser410 and Ser414 each carry phosphoserine. Over residues 411–422 (APVSVTLSTDRL) the composition is skewed to polar residues. Low complexity predominate over residues 424 to 444 (GNENNNGEINNNNGSNNSGSS). The segment covering 445–457 (KDTSQHSQESVTT) has biased composition (polar residues). Over residues 473–488 (STKKRRKSYVSKKTKP) the composition is skewed to basic residues. The segment covering 493-506 (SISITSKDSAHPMT) has biased composition (polar residues). Phosphoserine is present on Ser1130.

It belongs to the EDS1/RGT1 family. Post-translationally, glucose-induced phosphorylation regulates the DNA-binding activity. Hyperphosphorylation in cells growing on high levels of glucose does prevents DNA-binding and dephosphorylation restores DNA-binding ability.

The protein localises to the nucleus. Its subcellular location is the cytoplasm. Its function is as follows. Glucose-responsive transcription factor that regulates expression of several glucose transporter (HXT) genes in response to glucose. In the absence of glucose, it functions as a transcriptional repressor, whereas high concentrations of glucose cause it to function as a transcriptional activator. In cells growing on low levels of glucose, has a neutral role, neither repressing nor activating transcription. Binds the consensus binding site sequence 5'-CGGANNA-3', of which multiple copies are present in all HXT promoters regulated by RGT1. The chain is Glucose transport transcription regulator RGT1 (RGT1) from Saccharomyces cerevisiae (strain YJM789) (Baker's yeast).